A 520-amino-acid polypeptide reads, in one-letter code: DEP domain-containing protein 7 (520 aa).

Residues 45–137 (ALTQVEVKKR…SSCSLYRFIN (93 aa)) enclose the DEP domain. Residues 148–167 (KSNGRCTPQRPKHSSFQSAP) form a disordered region.

The protein belongs to the DEPDC7 family.

This Xenopus tropicalis (Western clawed frog) protein is DEP domain-containing protein 7 (depdc7).